We begin with the raw amino-acid sequence, 323 residues long: uncharacterized protein (323 aa).

Tyr59 serves as the catalytic Proton donor. Residue 198–208 (SPLAQGLLGGK) coordinates NADP(+).

This sequence belongs to the aldo/keto reductase family. Aldo/keto reductase 2 subfamily.

This is an uncharacterized protein from Mycobacterium tuberculosis (strain CDC 1551 / Oshkosh).